The sequence spans 330 residues: ADP-L-glycero-D-manno-heptose-6-epimerase (330 aa).

Residues 11–12 (FI), 32–33 (DN), K39, K54, 75–79 (EGACS), and N92 each bind NADP(+). Catalysis depends on Y139, which acts as the Proton acceptor. K143 provides a ligand contact to NADP(+). Substrate is bound at residue N168. V169 and K177 together coordinate NADP(+). K177 serves as the catalytic Proton acceptor. Substrate-binding positions include R179, H186, 200 to 203 (FGEY), R213, and Y292.

Belongs to the NAD(P)-dependent epimerase/dehydratase family. HldD subfamily. As to quaternary structure, homopentamer. NADP(+) is required as a cofactor.

The catalysed reaction is ADP-D-glycero-beta-D-manno-heptose = ADP-L-glycero-beta-D-manno-heptose. Its pathway is nucleotide-sugar biosynthesis; ADP-L-glycero-beta-D-manno-heptose biosynthesis; ADP-L-glycero-beta-D-manno-heptose from D-glycero-beta-D-manno-heptose 7-phosphate: step 4/4. Its function is as follows. Catalyzes the interconversion between ADP-D-glycero-beta-D-manno-heptose and ADP-L-glycero-beta-D-manno-heptose via an epimerization at carbon 6 of the heptose. The polypeptide is ADP-L-glycero-D-manno-heptose-6-epimerase (Burkholderia pseudomallei (strain K96243)).